Reading from the N-terminus, the 655-residue chain is Kelch-like protein 13 (655 aa).

In terms of domain architecture, BTB spans 92 to 161 (CDVTLMPGDT…IYTAKLSLNM (70 aa)). Residues 196 to 297 (CVEVGRIANT…TPQELINYVQ (102 aa)) enclose the BACK domain. 6 Kelch repeats span residues 341–389 (HLVT…VIGN), 390–441 (FLYV…ALKG), 442–488 (YLYA…VYGG), 490–535 (MYIS…TVGE), 537–587 (LYVI…VFEN), and 588–636 (KIYV…TLTV).

In terms of assembly, component of the BCR(KLHL9-KLHL13) E3 ubiquitin ligase complex, at least composed of CUL3, KLHL9, KLHL13 and RBX1. Interacts with AURKB.

It functions in the pathway protein modification; protein ubiquitination. In terms of biological role, substrate-specific adapter of a BCR (BTB-CUL3-RBX1) E3 ubiquitin-protein ligase complex required for mitotic progression and cytokinesis. The BCR(KLHL9-KLHL13) E3 ubiquitin ligase complex mediates the ubiquitination of AURKB and controls the dynamic behavior of AURKB on mitotic chromosomes and thereby coordinates faithful mitotic progression and completion of cytokinesis. The protein is Kelch-like protein 13 (KLHL13) of Bos taurus (Bovine).